A 159-amino-acid chain; its full sequence is Crossover junction endodeoxyribonuclease RuvC (159 aa).

Residues D7, E66, and D139 contribute to the active site. Residues D7, E66, and D139 each coordinate Mg(2+).

Belongs to the RuvC family. Homodimer which binds Holliday junction (HJ) DNA. The HJ becomes 2-fold symmetrical on binding to RuvC with unstacked arms; it has a different conformation from HJ DNA in complex with RuvA. In the full resolvosome a probable DNA-RuvA(4)-RuvB(12)-RuvC(2) complex forms which resolves the HJ. Mg(2+) serves as cofactor.

The protein localises to the cytoplasm. The catalysed reaction is Endonucleolytic cleavage at a junction such as a reciprocal single-stranded crossover between two homologous DNA duplexes (Holliday junction).. In terms of biological role, the RuvA-RuvB-RuvC complex processes Holliday junction (HJ) DNA during genetic recombination and DNA repair. Endonuclease that resolves HJ intermediates. Cleaves cruciform DNA by making single-stranded nicks across the HJ at symmetrical positions within the homologous arms, yielding a 5'-phosphate and a 3'-hydroxyl group; requires a central core of homology in the junction. The consensus cleavage sequence is 5'-(A/T)TT(C/G)-3'. Cleavage occurs on the 3'-side of the TT dinucleotide at the point of strand exchange. HJ branch migration catalyzed by RuvA-RuvB allows RuvC to scan DNA until it finds its consensus sequence, where it cleaves and resolves the cruciform DNA. In Sulfurovum sp. (strain NBC37-1), this protein is Crossover junction endodeoxyribonuclease RuvC.